A 287-amino-acid polypeptide reads, in one-letter code: MTFSQMILNLQNYWQEQGCAIMQPYDMPAGAGTFHPATFLRSLGKKPWAAAYVAPSRRPTDGRYGENPNRLGAYYQFQVLIKPSPDNIQELYLKSLENLGFDLKSHDIRFVEDNWESPSLGAWGLGWEVWLDGMEVTQFTYFQQVGGIAVDLVSAEITYGLERIAMYLQNVDNVYDIVWSEFNGEKIKYADVHKQSEYEFSKYNFEVSDVKILNEQFENSYKECKNILEQGLALPAYDYCMLAAHTFNLLDARGAISVAQRQDYMLKIRELSKNCAEIYKKNLNEAE.

This sequence belongs to the class-II aminoacyl-tRNA synthetase family. In terms of assembly, tetramer of two alpha and two beta subunits.

The protein resides in the cytoplasm. It catalyses the reaction tRNA(Gly) + glycine + ATP = glycyl-tRNA(Gly) + AMP + diphosphate. This chain is Glycine--tRNA ligase alpha subunit, found in Campylobacter jejuni subsp. jejuni serotype O:23/36 (strain 81-176).